The chain runs to 1072 residues: Neurofilament heavy polypeptide (1072 aa).

The residue at position 74 (serine 74) is a Phosphoserine. The region spanning 94 to 409 is the IF rod domain; sequence EKEQLQALND…KLLEGEECRI (316 aa). Coiled coils occupy residues 98–132, 174–222, and 293–380; these read LQAL…LRQQ, IAHV…LQEE, and LDRL…QLRE. The interval 278-643 is 55 X 6 AA approximate tandem repeats of K-S-P-[VAGSE]-[KEVTSGA]-[EAVK]; it reads TVQSTLQSEE…AKSPAEAKSP (366 aa). 3 positions are modified to phosphoserine: serine 343, serine 414, and serine 417. Residues 454–1072 are disordered; the sequence is EEQTEEIQVT…PEDKAAKGDK (619 aa). Positions 455 to 487 are enriched in acidic residues; it reads EQTEEIQVTEEVTEEEDKEAQGEEEEEAEEGGE. Residues 488–499 show a composition bias toward low complexity; the sequence is EAATTSPPAEEA. Serine 501 is modified (phosphoserine). The span at 501 to 584 shows a compositional bias: basic and acidic residues; it reads SPEKETKSPV…KSPAEAKSPA (84 aa). Repeat copies occupy residues 507-512, 515-520, 521-526, 527-532, 533-538, 539-544, 545-550, 551-556, 557-562, 563-568, 569-574, 575-580, 581-586, 587-592, 593-598, 599-604, 605-610, 611-616, 617-622, 623-628, 629-634, 635-640, 641-646, 647-652, 653-658, 659-664, 665-670, 671-676, 677-682, 683-688, 689-694, 695-700, 701-706, 707-712, 713-718, and 719-724. Residues serine 516, serine 522, serine 528, serine 534, serine 540, serine 546, serine 552, serine 558, serine 564, serine 570, serine 576, serine 582, serine 588, serine 594, serine 600, serine 606, serine 612, serine 618, serine 624, serine 627, serine 630, serine 636, serine 642, serine 648, serine 654, serine 660, serine 666, serine 672, serine 678, serine 684, serine 687, serine 690, serine 696, serine 702, serine 708, serine 714, and serine 720 each carry the phosphoserine modification. Residues 600–620 show a composition bias toward basic and acidic residues; the sequence is SPAEAKSPAEVKSPVEAKSPA. Low complexity predominate over residues 621 to 631; that stretch reads EAKSPASVKSP. Positions 720–774 are enriched in basic and acidic residues; the sequence is SPAEAKPPAEAKSPAEAKSPAEAKSPAEAKSPAEAKSPVEVKSPEKAKSPVKEGA. A 37; approximate repeat occupies 725 to 730; it reads KPPAEA. Tandem repeats lie at residues 731 to 736, 737 to 742, 743 to 748, 749 to 754, 755 to 760, 761 to 766, and 767 to 772. 6 positions are modified to phosphoserine: serine 732, serine 738, serine 744, serine 750, serine 756, and serine 762. Residues 775–780 form a 45; approximate repeat; that stretch reads KSLAEA. Phosphoserine is present on residues serine 776, serine 782, and serine 788. Repeat copies occupy residues 781 to 786 and 787 to 792. Composition is skewed to basic and acidic residues over residues 781–953 and 963–1072; these read KSPE…KAAA and GVKE…KGDK. The stretch at 795–800 is one 48; approximate repeat; the sequence is KPPAEV. A run of 4 repeats spans residues 801–806, 807–812, 815–820, and 826–831. Residues serine 802, serine 808, serine 816, and serine 827 each carry the phosphoserine modification. Threonine 832 is modified (phosphothreonine). Phosphoserine occurs at positions 846, 852, 860, 880, and 937. A run of 3 repeats spans residues 851-856, 859-864, and 879-884.

It belongs to the intermediate filament family. As to quaternary structure, forms heterodimers with NEFL; which can further hetero-oligomerize (in vitro). Forms heterodimers with INA (in vitro). There are a number of repeats of the tripeptide K-S-P, NFH is phosphorylated on a number of the serines in this motif. It is thought that phosphorylation of NFH results in the formation of interfilament cross bridges that are important in the maintenance of axonal caliber. In terms of processing, phosphorylation seems to play a major role in the functioning of the larger neurofilament polypeptides (NF-M and NF-H), the levels of phosphorylation being altered developmentally and coincidentally with a change in the neurofilament function. Post-translationally, phosphorylated in the head and rod regions by the PKC kinase PKN1, leading to the inhibition of polymerization. As to expression, expressed in the dorsal root ganglion neurons (at protein level). Expressed in cutaneous and muscular sensory neurons.

The protein resides in the cytoplasm. It is found in the cytoskeleton. It localises to the cell projection. The protein localises to the axon. Its function is as follows. Neurofilaments usually contain three intermediate filament proteins: NEFL, NEFM, and NEFH which are involved in the maintenance of neuronal caliber. NEFH has an important function in mature axons that is not subserved by the two smaller NEF proteins. May additionally cooperate with the neuronal intermediate filament proteins PRPH and INA to form neuronal filamentous networks. In Rattus norvegicus (Rat), this protein is Neurofilament heavy polypeptide (Nefh).